Consider the following 251-residue polypeptide: Aspartate/glutamate leucyltransferase (251 aa).

It belongs to the R-transferase family. Bpt subfamily.

Its subcellular location is the cytoplasm. It catalyses the reaction N-terminal L-glutamyl-[protein] + L-leucyl-tRNA(Leu) = N-terminal L-leucyl-L-glutamyl-[protein] + tRNA(Leu) + H(+). The enzyme catalyses N-terminal L-aspartyl-[protein] + L-leucyl-tRNA(Leu) = N-terminal L-leucyl-L-aspartyl-[protein] + tRNA(Leu) + H(+). Functions in the N-end rule pathway of protein degradation where it conjugates Leu from its aminoacyl-tRNA to the N-termini of proteins containing an N-terminal aspartate or glutamate. In Xanthomonas euvesicatoria pv. vesicatoria (strain 85-10) (Xanthomonas campestris pv. vesicatoria), this protein is Aspartate/glutamate leucyltransferase.